Consider the following 276-residue polypeptide: Dermonecrotic toxin LlSicTox-alphaIV2i (276 aa).

His-5 is an active-site residue. Glu-25 and Asp-27 together coordinate Mg(2+). His-41 serves as the catalytic Nucleophile. 2 cysteine pairs are disulfide-bonded: Cys-45-Cys-51 and Cys-47-Cys-193. Residue Asp-85 participates in Mg(2+) binding.

It belongs to the arthropod phospholipase D family. Class II subfamily. Requires Mg(2+) as cofactor. As to expression, expressed by the venom gland.

The protein resides in the secreted. The enzyme catalyses an N-(acyl)-sphingosylphosphocholine = an N-(acyl)-sphingosyl-1,3-cyclic phosphate + choline. The catalysed reaction is an N-(acyl)-sphingosylphosphoethanolamine = an N-(acyl)-sphingosyl-1,3-cyclic phosphate + ethanolamine. It carries out the reaction a 1-acyl-sn-glycero-3-phosphocholine = a 1-acyl-sn-glycero-2,3-cyclic phosphate + choline. It catalyses the reaction a 1-acyl-sn-glycero-3-phosphoethanolamine = a 1-acyl-sn-glycero-2,3-cyclic phosphate + ethanolamine. Dermonecrotic toxins cleave the phosphodiester linkage between the phosphate and headgroup of certain phospholipids (sphingolipid and lysolipid substrates), forming an alcohol (often choline) and a cyclic phosphate. This toxin acts on sphingomyelin (SM). It may also act on ceramide phosphoethanolamine (CPE), lysophosphatidylcholine (LPC) and lysophosphatidylethanolamine (LPE), but not on lysophosphatidylserine (LPS), and lysophosphatidylglycerol (LPG). It acts by transphosphatidylation, releasing exclusively cyclic phosphate products as second products. Induces dermonecrosis, hemolysis, increased vascular permeability, edema, inflammatory response, and platelet aggregation. In Loxosceles laeta (South American recluse spider), this protein is Dermonecrotic toxin LlSicTox-alphaIV2i.